We begin with the raw amino-acid sequence, 240 residues long: DNA repair protein RecO (240 aa).

Belongs to the RecO family.

In terms of biological role, involved in DNA repair and RecF pathway recombination. The protein is DNA repair protein RecO of Actinobacillus pleuropneumoniae serotype 3 (strain JL03).